An 82-amino-acid chain; its full sequence is ATP synthase subunit c, chloroplastic (82 aa).

A run of 2 helical transmembrane segments spans residues 7 to 27 (AASV…PGIG) and 57 to 77 (LAFM…LLFA).

Belongs to the ATPase C chain family. In terms of assembly, F-type ATPases have 2 components, F(1) - the catalytic core - and F(0) - the membrane proton channel. F(1) has five subunits: alpha(3), beta(3), gamma(1), delta(1), epsilon(1). F(0) has four main subunits: a(1), b(1), b'(1) and c(10-14). The alpha and beta chains form an alternating ring which encloses part of the gamma chain. F(1) is attached to F(0) by a central stalk formed by the gamma and epsilon chains, while a peripheral stalk is formed by the delta, b and b' chains.

The protein resides in the plastid. It is found in the chloroplast thylakoid membrane. Its function is as follows. F(1)F(0) ATP synthase produces ATP from ADP in the presence of a proton or sodium gradient. F-type ATPases consist of two structural domains, F(1) containing the extramembraneous catalytic core and F(0) containing the membrane proton channel, linked together by a central stalk and a peripheral stalk. During catalysis, ATP synthesis in the catalytic domain of F(1) is coupled via a rotary mechanism of the central stalk subunits to proton translocation. Key component of the F(0) channel; it plays a direct role in translocation across the membrane. A homomeric c-ring of between 10-14 subunits forms the central stalk rotor element with the F(1) delta and epsilon subunits. This chain is ATP synthase subunit c, chloroplastic, found in Porphyra purpurea (Red seaweed).